The primary structure comprises 356 residues: Phosphate acyltransferase (356 aa).

Belongs to the PlsX family. As to quaternary structure, homodimer. Probably interacts with PlsY.

It localises to the cytoplasm. The enzyme catalyses a fatty acyl-[ACP] + phosphate = an acyl phosphate + holo-[ACP]. It participates in lipid metabolism; phospholipid metabolism. In terms of biological role, catalyzes the reversible formation of acyl-phosphate (acyl-PO(4)) from acyl-[acyl-carrier-protein] (acyl-ACP). This enzyme utilizes acyl-ACP as fatty acyl donor, but not acyl-CoA. The sequence is that of Phosphate acyltransferase from Escherichia coli (strain 55989 / EAEC).